The sequence spans 85 residues: Protein RnfH (85 aa).

Belongs to the UPF0125 (RnfH) family.

This Cereibacter sphaeroides (strain ATCC 17029 / ATH 2.4.9) (Rhodobacter sphaeroides) protein is Protein RnfH.